Here is a 228-residue protein sequence, read N- to C-terminus: uncharacterized protein (228 aa).

The N-terminal stretch at methionine 1–glutamine 16 is a signal peptide. Residues leucine 206 to leucine 225 form a helical membrane-spanning segment.

To A.fulgidus AF_1225.

The protein resides in the membrane. This is an uncharacterized protein from Archaeoglobus fulgidus (strain ATCC 49558 / DSM 4304 / JCM 9628 / NBRC 100126 / VC-16).